A 61-amino-acid chain; its full sequence is U-scoloptoxin(14)-Sm1a (61 aa).

Residues 1-24 (MNPKLCMLLLVCLMAFYVIETVQA) form the signal peptide.

This sequence belongs to the scoloptoxin-14 family. Contains 4 disulfide bonds. Expressed by the venom gland.

Its subcellular location is the secreted. The chain is U-scoloptoxin(14)-Sm1a from Scolopendra morsitans (Tanzanian blue ringleg centipede).